Consider the following 216-residue polypeptide: Flavin-dependent thymidylate synthase (216 aa).

A ThyX domain is found at 9–206 (GFVELVDVMG…PWTYEAFIKY (198 aa)). FAD-binding positions include Ser-55, 78-80 (RHR), and Glu-86. DUMP-binding positions include 75–78 (QWFR), 86–90 (ELSGR), and Arg-145. The ThyX motif motif lies at 78–88 (RHRIASYNELS). FAD-binding positions include 161 to 163 (NAR) and Asn-167. Position 172 (Arg-172) interacts with dUMP. Catalysis depends on Arg-172, which acts as the Involved in ionization of N3 of dUMP, leading to its activation.

This sequence belongs to the thymidylate synthase ThyX family. As to quaternary structure, homotetramer. The cofactor is FAD.

It carries out the reaction dUMP + (6R)-5,10-methylene-5,6,7,8-tetrahydrofolate + NADPH + H(+) = dTMP + (6S)-5,6,7,8-tetrahydrofolate + NADP(+). The protein operates within pyrimidine metabolism; dTTP biosynthesis. In terms of biological role, catalyzes the reductive methylation of 2'-deoxyuridine-5'-monophosphate (dUMP) to 2'-deoxythymidine-5'-monophosphate (dTMP) while utilizing 5,10-methylenetetrahydrofolate (mTHF) as the methyl donor, and NADPH and FADH(2) as the reductant. This is Flavin-dependent thymidylate synthase from Thermotoga neapolitana (strain ATCC 49049 / DSM 4359 / NBRC 107923 / NS-E).